The chain runs to 399 residues: Elongation factor Tu (399 aa).

One can recognise a tr-type G domain in the interval 10–204; sequence KPHVNIGTIG…AVDASIPEPE (195 aa). The G1 stretch occupies residues 19 to 26; sequence GHVDHGKT. Residue 19 to 26 coordinates GTP; that stretch reads GHVDHGKT. Mg(2+) is bound at residue Thr-26. The G2 stretch occupies residues 60-64; it reads GITIN. A G3 region spans residues 81–84; that stretch reads DCPG. GTP is bound by residues 81-85 and 136-139; these read DCPGH and NKCD. A G4 region spans residues 136–139; the sequence is NKCD. The interval 174–176 is G5; sequence SGL.

This sequence belongs to the TRAFAC class translation factor GTPase superfamily. Classic translation factor GTPase family. EF-Tu/EF-1A subfamily. In terms of assembly, monomer.

The protein localises to the cytoplasm. The enzyme catalyses GTP + H2O = GDP + phosphate + H(+). Functionally, GTP hydrolase that promotes the GTP-dependent binding of aminoacyl-tRNA to the A-site of ribosomes during protein biosynthesis. The polypeptide is Elongation factor Tu (Prochlorococcus marinus (strain MIT 9312)).